Consider the following 137-residue polypeptide: Large ribosomal subunit protein uL16 (137 aa).

Belongs to the universal ribosomal protein uL16 family. As to quaternary structure, part of the 50S ribosomal subunit.

In terms of biological role, binds 23S rRNA and is also seen to make contacts with the A and possibly P site tRNAs. This chain is Large ribosomal subunit protein uL16, found in Methylocella silvestris (strain DSM 15510 / CIP 108128 / LMG 27833 / NCIMB 13906 / BL2).